A 503-amino-acid polypeptide reads, in one-letter code: UDP-N-acetylmuramate--L-alanine ligase (503 aa).

120-126 (GTHGKTS) is a binding site for ATP.

The protein belongs to the MurCDEF family.

Its subcellular location is the cytoplasm. It catalyses the reaction UDP-N-acetyl-alpha-D-muramate + L-alanine + ATP = UDP-N-acetyl-alpha-D-muramoyl-L-alanine + ADP + phosphate + H(+). It functions in the pathway cell wall biogenesis; peptidoglycan biosynthesis. Its function is as follows. Cell wall formation. The polypeptide is UDP-N-acetylmuramate--L-alanine ligase (Rhodococcus opacus (strain B4)).